The following is a 106-amino-acid chain: Large ribosomal subunit protein eL42 (106 aa).

It belongs to the eukaryotic ribosomal protein eL42 family.

This chain is Large ribosomal subunit protein eL42 (RPL44), found in Wickerhamomyces ciferrii (strain ATCC 14091 / BCRC 22168 / CBS 111 / JCM 3599 / NBRC 0793 / NRRL Y-1031 F-60-10) (Yeast).